The following is a 375-amino-acid chain: N5-carboxyaminoimidazole ribonucleotide synthase (375 aa).

Residues Arg-108, Lys-148, 153 to 159, 183 to 186, Glu-191, His-214, and 268 to 269 each bind ATP; these read GYDGKGQ, EQYL, and NE. An ATP-grasp domain is found at 112–298; that stretch reads KQTLQDSGSN…QFDTHIKAIT (187 aa).

This sequence belongs to the PurK/PurT family. As to quaternary structure, homodimer.

The catalysed reaction is 5-amino-1-(5-phospho-beta-D-ribosyl)imidazole + hydrogencarbonate + ATP = 5-carboxyamino-1-(5-phospho-D-ribosyl)imidazole + ADP + phosphate + 2 H(+). It functions in the pathway purine metabolism; IMP biosynthesis via de novo pathway; 5-amino-1-(5-phospho-D-ribosyl)imidazole-4-carboxylate from 5-amino-1-(5-phospho-D-ribosyl)imidazole (N5-CAIR route): step 1/2. Functionally, catalyzes the ATP-dependent conversion of 5-aminoimidazole ribonucleotide (AIR) and HCO(3)(-) to N5-carboxyaminoimidazole ribonucleotide (N5-CAIR). This Staphylococcus saprophyticus subsp. saprophyticus (strain ATCC 15305 / DSM 20229 / NCIMB 8711 / NCTC 7292 / S-41) protein is N5-carboxyaminoimidazole ribonucleotide synthase.